We begin with the raw amino-acid sequence, 582 residues long: Protein alan shepard (582 aa).

A compositionally biased stretch (pro residues) spans 1 to 12 (MHPRYSPAPPPQ). The segment at 1–73 (MHPRYSPAPP…AAPPTSRSAF (73 aa)) is disordered. Tyr5 carries the post-translational modification Phosphotyrosine. Low complexity predominate over residues 13–24 (QQQQMGGPPHQQ). Residues 25–35 (QGGGGGGGGSM) show a composition bias toward gly residues. Residues 37–57 (GPSNAQQLPPQIPRSQNYSNG) are compositionally biased toward polar residues. The segment covering 58–72 (SSSSAAAAPPTSRSA) has biased composition (low complexity). Phosphotyrosine is present on residues Tyr125 and Tyr142. The tract at residues 164–225 (PATTTYGQRV…TVQNQNQQGG (62 aa)) is disordered. The span at 178–225 (SPSNTNSSSSSNTGSQSGTLSTSLSNTTNTNTNMGPNGTVQNQNQQGG) shows a compositional bias: low complexity. 2 consecutive RRM domains span residues 231–304 (TNLY…MAKQ) and 310–389 (TNLY…FADG). The tract at residues 555–582 (PMTDSEQASTAASPDEAYTQYPHQAAPK) is disordered.

Functionally, has a role in the perception of gravity. This chain is Protein alan shepard, found in Drosophila erecta (Fruit fly).